The chain runs to 269 residues: Ribonuclease HII (269 aa).

In terms of domain architecture, RNase H type-2 spans 83–269 (YLIAGVDEVG…HRMSFLTNIL (187 aa)). Residues Asp-89, Glu-90, and Asp-185 each coordinate a divalent metal cation.

The protein belongs to the RNase HII family. Mn(2+) is required as a cofactor. Requires Mg(2+) as cofactor.

It is found in the cytoplasm. The enzyme catalyses Endonucleolytic cleavage to 5'-phosphomonoester.. In terms of biological role, endonuclease that specifically degrades the RNA of RNA-DNA hybrids. The protein is Ribonuclease HII of Clostridium botulinum (strain Hall / ATCC 3502 / NCTC 13319 / Type A).